The primary structure comprises 313 residues: Acetaldehyde dehydrogenase 1 (313 aa).

16-19 provides a ligand contact to NAD(+); the sequence is SGNI. The active-site Acyl-thioester intermediate is the cysteine 131. NAD(+)-binding positions include 162-170 and asparagine 281; that span reads SAGPGTRAN.

This sequence belongs to the acetaldehyde dehydrogenase family.

It catalyses the reaction acetaldehyde + NAD(+) + CoA = acetyl-CoA + NADH + H(+). The protein is Acetaldehyde dehydrogenase 1 of Mycobacterium sp. (strain JLS).